Consider the following 348-residue polypeptide: Probable dual-specificity RNA methyltransferase RlmN (348 aa).

The active-site Proton acceptor is the glutamate 89. The 234-residue stretch at 95 to 328 (HKNRNTVCVS…VTLRISYGSK (234 aa)) folds into the Radical SAM core domain. Residues cysteine 102 and cysteine 333 are joined by a disulfide bond. The [4Fe-4S] cluster site is built by cysteine 109, cysteine 113, and cysteine 116. Residues 159–160 (GE), serine 191, 214–216 (SLH), and asparagine 290 each bind S-adenosyl-L-methionine. Cysteine 333 (S-methylcysteine intermediate) is an active-site residue.

This sequence belongs to the radical SAM superfamily. RlmN family. It depends on [4Fe-4S] cluster as a cofactor.

The protein localises to the cytoplasm. It carries out the reaction adenosine(2503) in 23S rRNA + 2 reduced [2Fe-2S]-[ferredoxin] + 2 S-adenosyl-L-methionine = 2-methyladenosine(2503) in 23S rRNA + 5'-deoxyadenosine + L-methionine + 2 oxidized [2Fe-2S]-[ferredoxin] + S-adenosyl-L-homocysteine. The catalysed reaction is adenosine(37) in tRNA + 2 reduced [2Fe-2S]-[ferredoxin] + 2 S-adenosyl-L-methionine = 2-methyladenosine(37) in tRNA + 5'-deoxyadenosine + L-methionine + 2 oxidized [2Fe-2S]-[ferredoxin] + S-adenosyl-L-homocysteine. Its function is as follows. Specifically methylates position 2 of adenine 2503 in 23S rRNA and position 2 of adenine 37 in tRNAs. The polypeptide is Probable dual-specificity RNA methyltransferase RlmN (Dictyoglomus turgidum (strain DSM 6724 / Z-1310)).